The chain runs to 838 residues: Glycogen phosphorylase, brain form (838 aa).

A2 carries the post-translational modification N-acetylalanine. At S15 the chain carries Phosphoserine. AMP-binding residues include D43, Y197, and R310. Position 197 is a phosphotyrosine (Y197). A Phosphotyrosine modification is found at Y473. At S524 the chain carries Phosphoserine. K569 contacts pyridoxal 5'-phosphate. The pyridoxal 5'-phosphate stretch occupies residues 677–678 (TG). N6-(pyridoxal phosphate)lysine is present on K681.

The protein belongs to the glycogen phosphorylase family. As to quaternary structure, homodimer. Dimers associate into a tetramer to form the enzymatically active phosphorylase A. Requires pyridoxal 5'-phosphate as cofactor. In terms of processing, phosphorylation of Ser-15 converts phosphorylase B (unphosphorylated) to phosphorylase A.

The catalysed reaction is [(1-&gt;4)-alpha-D-glucosyl](n) + phosphate = [(1-&gt;4)-alpha-D-glucosyl](n-1) + alpha-D-glucose 1-phosphate. Activity of phosphorylase is controlled both by allosteric means (through the non-covalent binding of metabolites) and by covalent modification. Thus AMP allosterically activates, whereas ATP, ADP, and glucose-6-phosphate allosterically inhibit, phosphorylase B. Glycogen phosphorylase that regulates glycogen mobilization. Phosphorylase is an important allosteric enzyme in carbohydrate metabolism. Enzymes from different sources differ in their regulatory mechanisms and in their natural substrates. However, all known phosphorylases share catalytic and structural properties. The protein is Glycogen phosphorylase, brain form (Pygb) of Rattus norvegicus (Rat).